The primary structure comprises 377 residues: Succinyl-diaminopimelate desuccinylase (377 aa).

Residue histidine 68 coordinates Zn(2+). Aspartate 70 is an active-site residue. Aspartate 101 is a binding site for Zn(2+). The active-site Proton acceptor is the glutamate 135. Zn(2+) is bound by residues glutamate 136, glutamate 164, and histidine 350.

It belongs to the peptidase M20A family. DapE subfamily. In terms of assembly, homodimer. The cofactor is Zn(2+). Requires Co(2+) as cofactor.

The enzyme catalyses N-succinyl-(2S,6S)-2,6-diaminopimelate + H2O = (2S,6S)-2,6-diaminopimelate + succinate. It functions in the pathway amino-acid biosynthesis; L-lysine biosynthesis via DAP pathway; LL-2,6-diaminopimelate from (S)-tetrahydrodipicolinate (succinylase route): step 3/3. Functionally, catalyzes the hydrolysis of N-succinyl-L,L-diaminopimelic acid (SDAP), forming succinate and LL-2,6-diaminopimelate (DAP), an intermediate involved in the bacterial biosynthesis of lysine and meso-diaminopimelic acid, an essential component of bacterial cell walls. This chain is Succinyl-diaminopimelate desuccinylase, found in Acinetobacter baylyi (strain ATCC 33305 / BD413 / ADP1).